The following is a 161-amino-acid chain: Peptidyl-prolyl cis-trans isomerase-like 1 (161 aa).

In terms of domain architecture, PPIase cyclophilin-type spans 1 to 155 (MATDVVFDTS…DEVKIIRAKV (155 aa)).

This sequence belongs to the cyclophilin-type PPIase family. PPIL1 subfamily.

The catalysed reaction is [protein]-peptidylproline (omega=180) = [protein]-peptidylproline (omega=0). In terms of biological role, PPIases accelerate the folding of proteins. It catalyzes the cis-trans isomerization of proline imidic peptide bonds in oligopeptides. The polypeptide is Peptidyl-prolyl cis-trans isomerase-like 1 (cyp1) (Aspergillus fumigatus (strain ATCC MYA-4609 / CBS 101355 / FGSC A1100 / Af293) (Neosartorya fumigata)).